A 236-amino-acid polypeptide reads, in one-letter code: Ribosome maturation protein SDO1 homolog (236 aa).

The protein belongs to the SDO1/SBDS family.

The sequence is that of Ribosome maturation protein SDO1 homolog from Pyrococcus horikoshii (strain ATCC 700860 / DSM 12428 / JCM 9974 / NBRC 100139 / OT-3).